The primary structure comprises 144 residues: Peptide methionine sulfoxide reductase MsrB (144 aa).

Residues 1–12 are compositionally biased toward basic and acidic residues; sequence MDKQQGELRQRL. The tract at residues 1-25 is disordered; sequence MDKQQGELRQRLTPEQYAVTQEAAT. Residues 5-128 enclose the MsrB domain; the sequence is QGELRQRLTP…NSAALKFIPV (124 aa). Residue Cys117 is the Nucleophile of the active site.

The protein belongs to the MsrB Met sulfoxide reductase family.

It carries out the reaction L-methionyl-[protein] + [thioredoxin]-disulfide + H2O = L-methionyl-(R)-S-oxide-[protein] + [thioredoxin]-dithiol. The sequence is that of Peptide methionine sulfoxide reductase MsrB from Lactiplantibacillus plantarum (strain ATCC BAA-793 / NCIMB 8826 / WCFS1) (Lactobacillus plantarum).